Consider the following 94-residue polypeptide: Co-chaperonin GroES (94 aa).

This sequence belongs to the GroES chaperonin family. In terms of assembly, heptamer of 7 subunits arranged in a ring. Interacts with the chaperonin GroEL.

The protein localises to the cytoplasm. In terms of biological role, together with the chaperonin GroEL, plays an essential role in assisting protein folding. The GroEL-GroES system forms a nano-cage that allows encapsulation of the non-native substrate proteins and provides a physical environment optimized to promote and accelerate protein folding. GroES binds to the apical surface of the GroEL ring, thereby capping the opening of the GroEL channel. The chain is Co-chaperonin GroES from Clostridium botulinum (strain Alaska E43 / Type E3).